We begin with the raw amino-acid sequence, 596 residues long: MTSPSPRIQIISTDSAVRSPQRIQIVTDQQTGQKLQIVTAVDASGSSKQQFILTSPDGAGTGKVILASPETSSAKQLIFTTSDNLVPGRIQIVTDSASVERLLGKADVQRPQVVEYCVVCGDKASGRHYGAVSCEGCKGFFKRSVRKNLTYSCRSSQDCIINKHHRNRCQFCRLKKCLEMGMKMESVQSERKPFDVQREKPSNCAASTEKIYIRKDLRSPLIATPTFVADKDGSRQTGLLDPGMLVNIQQPLIREDGTVLLATDSKAETSQGALGTLANVVTSLANLSESLNNGDASEMQPEDQSASEITRAFDTLAKALNTTDSASPPSLADGIDASGGGSIHVISRDQSTPIIEVEGPLLSDTHVTFKLTMPSPMPEYLNVHYICESASRLLFLSMHWARSIPAFQALGQDCNTSLVRACWNELFTLGLAQCAQVMSLSTILAAIVNHLQNSIQEDKLSGDRIKQVMEHIWKLQEFCNSMAKLDIDGHEYAYLKAIVLFSPDHPGLTGTSQIEKFQEKAQMELQDYVQKTYSEDTYRLARILVRLPALRLMSSNITEELFFTGLIGNVSIDSIIPYILKMETAEYNGQITGASL.

Ser-19 is subject to Phosphoserine; by MAPK. A Phosphoserine modification is found at Ser-46. 2 positions are modified to phosphoserine; by MAPK: Ser-55 and Ser-68. Ser-98 carries the phosphoserine modification. The nuclear receptor DNA-binding region spans 114–189 (VEYCVVCGDK…MGMKMESVQS (76 aa)). NR C4-type zinc fingers lie at residues 117 to 137 (CVVC…CEGC) and 153 to 177 (CRSS…LKKC). Lys-192 participates in a covalent cross-link: Glycyl lysine isopeptide (Lys-Gly) (interchain with G-Cter in SUMO2). Phosphoserine is present on Ser-219. The residue at position 231 (Lys-231) is an N6-acetyllysine. Positions 341 to 583 (GSIHVISRDQ…SIIPYILKME (243 aa)) constitute an NR LBD domain.

The protein belongs to the nuclear hormone receptor family. NR2 subfamily. As to quaternary structure, homodimer; can bind DNA as homodimer. Heterodimer; binds DNA as a heterodimer with NR2C1 required for chromatin remodeling and for binding to promoter regions such as globin DR1 repeats. Interacts with NR2C2AP; the interaction represses selective NR2C2-mediated transcriptional activity. Interacts with PCAF; the interaction preferentially occurs on the non-phosphorylated form and induces NR2C2-mediated transactivation activity and does not require the ligand-binding domain. Interacts (MAPK-mediated phosphorylated form) with NRIP1; the interaction promotes repression of NR2C2-mediated activity. Interacts with NLRP10. Interacts (via ligand-binding region) with transcriptional corepressor JAZF1; the interaction promotes NR2C2-mediated transcriptional repression. Post-translationally, phosphorylation on Ser-19 and Ser-68 is an important regulator of NR2C2-mediated transcriptional activity. Phosphorylation on these residues recruits the corepressor, NRIP1, leading to transcripional repression, whereas the non-phosphorylated form preferentially recruits the coactivator, PCAF. In terms of tissue distribution, expressed in hepatocytes. Also expressed in granule cells of the hippocampus and the cerebellum.

It is found in the nucleus. Functionally, orphan nuclear receptor that can act as a repressor or activator of transcription. An important repressor of nuclear receptor signaling pathways such as retinoic acid receptor, retinoid X, vitamin D3 receptor, thyroid hormone receptor and estrogen receptor pathways. May regulate gene expression during the late phase of spermatogenesis. Activates transcriptional activity of LHCG and is antagonist of PPARA-mediated transactivation. Together with NR2C1, forms the core of the DRED (direct repeat erythroid-definitive) complex that represses embryonic and fetal globin transcription including that of GATA1. Binds to hormone response elements (HREs) consisting of two 5'-AGGTCA-3' half site direct repeat consensus sequences. Plays a fundamental role in early embryonic development and embryonic stem cells. Required for normal spermatogenesis and cerebellum development. Appears to be important for neurodevelopmentally regulated behavior. The chain is Nuclear receptor subfamily 2 group C member 2 (Nr2c2) from Rattus norvegicus (Rat).